We begin with the raw amino-acid sequence, 187 residues long: Elongation factor P (187 aa).

This sequence belongs to the elongation factor P family.

It is found in the cytoplasm. The protein operates within protein biosynthesis; polypeptide chain elongation. Functionally, involved in peptide bond synthesis. Stimulates efficient translation and peptide-bond synthesis on native or reconstituted 70S ribosomes in vitro. Probably functions indirectly by altering the affinity of the ribosome for aminoacyl-tRNA, thus increasing their reactivity as acceptors for peptidyl transferase. This chain is Elongation factor P, found in Corynebacterium kroppenstedtii (strain DSM 44385 / JCM 11950 / CIP 105744 / CCUG 35717).